Reading from the N-terminus, the 272-residue chain is Phosphate import ATP-binding protein PstB 1 (272 aa).

Residues 26–267 (ISIENLNLFY…PMKKQTEDYI (242 aa)) form the ABC transporter domain. Residue 58-65 (GPSGCGKS) coordinates ATP.

This sequence belongs to the ABC transporter superfamily. Phosphate importer (TC 3.A.1.7) family. As to quaternary structure, the complex is composed of two ATP-binding proteins (PstB), two transmembrane proteins (PstC and PstA) and a solute-binding protein (PstS).

The protein resides in the cell inner membrane. It carries out the reaction phosphate(out) + ATP + H2O = ADP + 2 phosphate(in) + H(+). Part of the ABC transporter complex PstSACB involved in phosphate import. Responsible for energy coupling to the transport system. The polypeptide is Phosphate import ATP-binding protein PstB 1 (Vibrio parahaemolyticus serotype O3:K6 (strain RIMD 2210633)).